Consider the following 583-residue polypeptide: Exonuclease 3'-5' domain-containing protein 2 (583 aa).

Topologically, residues Met1 to Arg11 are mitochondrial intermembrane. The chain crosses the membrane as a helical span at residues Asn12–His29. At Arg30–Thr583 the chain is on the cytoplasmic side. The 167-residue stretch at Thr62–Leu228 folds into the 3'-5' exonuclease domain. A divalent metal cation contacts are provided by Asp83, Glu85, and Asp213. Residues Gly266–Asn281 are compositionally biased toward polar residues. Residues Gly266 to Lys286 are disordered.

The protein belongs to the EXD2 family. Homodimer. Requires Mg(2+) as cofactor. Mn(2+) is required as a cofactor.

The protein localises to the mitochondrion membrane. Its function is as follows. 3'-5' exoribonuclease required for mitochondrial metabolism. The chain is Exonuclease 3'-5' domain-containing protein 2 from Drosophila melanogaster (Fruit fly).